A 263-amino-acid polypeptide reads, in one-letter code: N-acetylgalactosamine permease IID component (263 aa).

The PTS EIID domain occupies 3-263 (SEISKKDITR…SIVCSAFGIL (261 aa)). Helical transmembrane passes span 61–81 (LEFI…LISM), 98–118 (LFGP…LPIM), 131–151 (LLGP…RVGW), 178–198 (TILG…INVV), 215–235 (FFDK…MYYF), and 243–263 (PVLL…FGIL).

It is found in the cell inner membrane. The phosphoenolpyruvate-dependent sugar phosphotransferase system (PTS), a major carbohydrate active -transport system, catalyzes the phosphorylation of incoming sugar substrates concomitant with their translocation across the cell membrane. This system is involved in N-acetylgalactosamine transport. This chain is N-acetylgalactosamine permease IID component (agaD), found in Escherichia coli (strain K12).